A 349-amino-acid chain; its full sequence is Neutral protease 2 homolog ACLA_052720 (349 aa).

The signal sequence occupies residues 1 to 19 (MQLTVLASAILALAQGALA). The propeptide occupies 20–172 (IPAKAPALDV…PAAINLLDRR (153 aa)). Intrachain disulfides connect Cys178-Cys250 and Cys257-Cys275. His300 provides a ligand contact to Zn(2+). Glu301 is a catalytic residue. 2 residues coordinate Zn(2+): His304 and Asp315.

Belongs to the peptidase M35 family. Requires Zn(2+) as cofactor.

It is found in the secreted. The enzyme catalyses Preferential cleavage of bonds with hydrophobic residues in P1'. Also 3-Asn-|-Gln-4 and 8-Gly-|-Ser-9 bonds in insulin B chain.. In terms of biological role, secreted metalloproteinase that allows assimilation of proteinaceous substrates. Shows high activities on basic nuclear substrates such as histone and protamine. This chain is Neutral protease 2 homolog ACLA_052720, found in Aspergillus clavatus (strain ATCC 1007 / CBS 513.65 / DSM 816 / NCTC 3887 / NRRL 1 / QM 1276 / 107).